Here is a 31-residue protein sequence, read N- to C-terminus: Cytochrome b6-f complex subunit 6 (31 aa).

The chain crosses the membrane as a helical span at residues 4-24 (ITSYFGFLLAALTITSALFIG).

It belongs to the PetL family. In terms of assembly, the 4 large subunits of the cytochrome b6-f complex are cytochrome b6, subunit IV (17 kDa polypeptide, PetD), cytochrome f and the Rieske protein, while the 4 small subunits are PetG, PetL, PetM and PetN. The complex functions as a dimer.

It localises to the plastid. The protein resides in the chloroplast thylakoid membrane. Its function is as follows. Component of the cytochrome b6-f complex, which mediates electron transfer between photosystem II (PSII) and photosystem I (PSI), cyclic electron flow around PSI, and state transitions. PetL is important for photoautotrophic growth as well as for electron transfer efficiency and stability of the cytochrome b6-f complex. In Coffea arabica (Arabian coffee), this protein is Cytochrome b6-f complex subunit 6.